The sequence spans 706 residues: Fatty acid oxidation complex subunit alpha (706 aa).

The tract at residues 1 to 188 (MEKTFSLSRR…KMGLVDDVVP (188 aa)) is enoyl-CoA hydratase. Residues 308-706 (RKVAKAVVLG…AMAAEGKTFY (399 aa)) are 3-hydroxyacyl-CoA dehydrogenase.

The protein in the N-terminal section; belongs to the enoyl-CoA hydratase/isomerase family. In the central section; belongs to the 3-hydroxyacyl-CoA dehydrogenase family. In terms of assembly, heterotetramer of two alpha chains (FadJ) and two beta chains (FadI).

It is found in the cytoplasm. The catalysed reaction is a (3S)-3-hydroxyacyl-CoA = a (2E)-enoyl-CoA + H2O. It catalyses the reaction a 4-saturated-(3S)-3-hydroxyacyl-CoA = a (3E)-enoyl-CoA + H2O. It carries out the reaction a (3S)-3-hydroxyacyl-CoA + NAD(+) = a 3-oxoacyl-CoA + NADH + H(+). The enzyme catalyses (3S)-3-hydroxybutanoyl-CoA = (3R)-3-hydroxybutanoyl-CoA. Its pathway is lipid metabolism; fatty acid beta-oxidation. Catalyzes the formation of a hydroxyacyl-CoA by addition of water on enoyl-CoA. Also exhibits 3-hydroxyacyl-CoA epimerase and 3-hydroxyacyl-CoA dehydrogenase activities. In Shewanella amazonensis (strain ATCC BAA-1098 / SB2B), this protein is Fatty acid oxidation complex subunit alpha.